Consider the following 282-residue polypeptide: Elongation factor Ts (282 aa).

Residues 79–82 (TDFV) are involved in Mg(2+) ion dislocation from EF-Tu.

The protein belongs to the EF-Ts family.

The protein localises to the cytoplasm. In terms of biological role, associates with the EF-Tu.GDP complex and induces the exchange of GDP to GTP. It remains bound to the aminoacyl-tRNA.EF-Tu.GTP complex up to the GTP hydrolysis stage on the ribosome. This is Elongation factor Ts from Shewanella woodyi (strain ATCC 51908 / MS32).